We begin with the raw amino-acid sequence, 219 residues long: ER lumen protein-retaining receptor (219 aa).

The Lumenal portion of the chain corresponds to 1–5 (MNPFR). Residues 6-26 (ILGDLSHLTSILILIHNIKTT) form a helical membrane-spanning segment. Over 27–37 (RYIEGISFKTQ) the chain is Cytoplasmic. 2 helical membrane passes run 38–58 (TLYA…HWVS) and 59–79 (LYNA…VVLL). Over 80–98 (QGSKRTNTIAYNEMLMHDT) the chain is Cytoplasmic. Residues 99–116 (FKIQHLLIGSALMSVFFH) form a helical membrane-spanning segment. Residues 117 to 118 (HK) are Lumenal-facing. A helical transmembrane segment spans residues 119-139 (FTFLELAWSFSVWLESVAILP). Topologically, residues 140-152 (QLYMLSKGGKTRS) are cytoplasmic. A helical transmembrane segment spans residues 153–173 (LTVHYIFAMGLYRALYIPNWI). Residues 174 to 185 (WRYSTEDKKLDK) lie on the Lumenal side of the membrane. The helical transmembrane segment at 186–206 (IAFFAGLLQTLLYSDFFYIYY) threads the bilayer. Topologically, residues 207–219 (TKVIRGKGFKLPK) are cytoplasmic.

Belongs to the ERD2 family.

It is found in the endoplasmic reticulum membrane. Required for the retention of luminal endoplasmic reticulum proteins. Determines the specificity of the luminal ER protein retention system. Also required for normal vesicular traffic through the Golgi. This receptor strongly recognizes H-D-E-L and weakly recognizes D-D-E-L and K-D-E-L. In Saccharomyces cerevisiae (strain ATCC 204508 / S288c) (Baker's yeast), this protein is ER lumen protein-retaining receptor.